Here is a 271-residue protein sequence, read N- to C-terminus: Aminoglycoside 3'-phosphotransferase (271 aa).

Asp-198 (proton acceptor) is an active-site residue.

This sequence belongs to the aminoglycoside phosphotransferase family.

The enzyme catalyses kanamycin A + ATP = kanamycin 3'-phosphate + ADP + H(+). Resistance to kanamycin and structurally-related aminoglycosides, including amikacin. In Salmonella typhimurium, this protein is Aminoglycoside 3'-phosphotransferase.